The following is a 589-amino-acid chain: L-fucose isomerase (589 aa).

Residues glutamate 340 and aspartate 364 each act as proton acceptor in the active site. The Mn(2+) site is built by glutamate 340, aspartate 364, and histidine 527.

It belongs to the L-fucose isomerase family. The cofactor is Mn(2+).

The protein resides in the cytoplasm. It carries out the reaction L-fucose = L-fuculose. Its pathway is carbohydrate degradation; L-fucose degradation; L-lactaldehyde and glycerone phosphate from L-fucose: step 1/3. Its function is as follows. Converts the aldose L-fucose into the corresponding ketose L-fuculose. The sequence is that of L-fucose isomerase from Haemophilus influenzae (strain PittEE).